We begin with the raw amino-acid sequence, 362 residues long: Prostaglandin E2 receptor EP2 subtype (362 aa).

Residues 1-24 are Extracellular-facing; sequence MDNFLNDSKLMEDCKSRQWLLSGE. An N-linked (GlcNAc...) asparagine glycan is attached at asparagine 6. The helical transmembrane segment at 25–48 threads the bilayer; that stretch reads SPAISSVMFSAGVLGNLIALALLA. Over 49 to 66 the chain is Cytoplasmic; sequence RRWRGDTGCSAGSRTSIS. The helical transmembrane segment at 67-92 threads the bilayer; it reads LFHVLVTELVLTDLLGTCLISPVVLA. Over 93-112 the chain is Extracellular; the sequence is SYSRNQTLVALAPESHACTY. The cysteines at positions 110 and 188 are disulfide-linked. The chain crosses the membrane as a helical span at residues 113-133; it reads FAFTMTFFSLATMLMLFAMAL. The Cytoplasmic segment spans residues 134–152; the sequence is ERYLSIGYPYFYRRHLSRR. Residues 153-177 traverse the membrane as a helical segment; sequence GGLAVLPVIYGASLLFCSLPLLNYG. Residues 178-199 are Extracellular-facing; the sequence is EYVQYCPGTWCFIRHGRTAYLQ. Residues 200 to 224 traverse the membrane as a helical segment; the sequence is LYATMLLLLIVAVLACNISVILNLI. Residues 225 to 262 lie on the Cytoplasmic side of the membrane; the sequence is RMHRRSRRSRCGLSGSSLRGPGSRRRGERTSMAEETDH. A disordered region spans residues 234–255; sequence RCGLSGSSLRGPGSRRRGERTS. A compositionally biased stretch (low complexity) spans 235-245; it reads CGLSGSSLRGP. Residues 263 to 286 traverse the membrane as a helical segment; sequence LILLAIMTITFAICSLPFTIFAYM. The Extracellular segment spans residues 287–299; it reads DETSSLKEKWDLR. A helical membrane pass occupies residues 300–323; that stretch reads ALRFLSVNSIIDPWVFAILRPPVL. Residues 324-362 are Cytoplasmic-facing; that stretch reads RLMRSVLCCRTSLRTQEAQQTSCSTQSSASKQTDLCGQL.

The protein belongs to the G-protein coupled receptor 1 family.

The protein resides in the cell membrane. Receptor for prostaglandin E2 (PGE2). The activity of this receptor is mediated by G(s) proteins that stimulate adenylate cyclase. The subsequent raise in intracellular cAMP is responsible for the relaxing effect of this receptor on smooth muscle. This Mus musculus (Mouse) protein is Prostaglandin E2 receptor EP2 subtype (Ptger2).